We begin with the raw amino-acid sequence, 295 residues long: Formamidopyrimidine-DNA glycosylase (295 aa).

Residue proline 2 is the Schiff-base intermediate with DNA of the active site. Catalysis depends on glutamate 3, which acts as the Proton donor. Lysine 61 acts as the Proton donor; for beta-elimination activity in catalysis. The DNA site is built by histidine 95, arginine 117, and arginine 159. The segment at 245 to 279 adopts an FPG-type zinc-finger fold; sequence HAYGREGEACERCGTPIRRVAFMNRSSYFCPVCQP. Arginine 269 functions as the Proton donor; for delta-elimination activity in the catalytic mechanism.

It belongs to the FPG family. Monomer. The cofactor is Zn(2+).

The catalysed reaction is Hydrolysis of DNA containing ring-opened 7-methylguanine residues, releasing 2,6-diamino-4-hydroxy-5-(N-methyl)formamidopyrimidine.. It catalyses the reaction 2'-deoxyribonucleotide-(2'-deoxyribose 5'-phosphate)-2'-deoxyribonucleotide-DNA = a 3'-end 2'-deoxyribonucleotide-(2,3-dehydro-2,3-deoxyribose 5'-phosphate)-DNA + a 5'-end 5'-phospho-2'-deoxyribonucleoside-DNA + H(+). Involved in base excision repair of DNA damaged by oxidation or by mutagenic agents. Acts as a DNA glycosylase that recognizes and removes damaged bases. Has a preference for oxidized purines, such as 7,8-dihydro-8-oxoguanine (8-oxoG). Has AP (apurinic/apyrimidinic) lyase activity and introduces nicks in the DNA strand. Cleaves the DNA backbone by beta-delta elimination to generate a single-strand break at the site of the removed base with both 3'- and 5'-phosphates. The sequence is that of Formamidopyrimidine-DNA glycosylase from Nocardioides sp. (strain ATCC BAA-499 / JS614).